A 696-amino-acid polypeptide reads, in one-letter code: MSGGRFDFDDGGAYCGGWEGGKAHGHGLCTGPKGQGEYSGSWNFGFEVAGVYTWPSGNTFEGYWSQGKRHGLGIETKGRWLYKGEWTHGFKGRYGIRQSTNSGAKYEGTWNNGLQDGYGTETYADGGTYQGQFTNGMRHGYGVRQSVPYGMAVVVRSPLRTSLSSLRSEHSNGTVAPDSPAADGPMLPSPPVPRGGFALTLLATAEAARPQGLFTRGTLLGRLRRSESRTSLGSQRSRLSFLKSELSSGASDAASTGSLAEGAEGPDDAAAPFDADIDATTTETYMGEWKNDKRSGFGVSERSSGLRYEGEWLDNLRHGYGRTTLPDGHREEGKYRHNVLVKGTKRRVLPLKSSKVRQKVEHGVEGAQRAAAIARQKAEIAASRTSHAKAKAEAAEQAALAANQESNIARTLAKELAPDFYQPGPEYQKRRLLQEILENSESLLEPPERGLGTGLPERPRESPQLHERETPQPEGGPPSPAGTPPQPKRPRPGASKDGLLSPGSWNGEPGGEGSRPATPSDGAGRRSPARPASEHMAIEALQPPPAPSQEPEVAMYRGYHSYAVRTGPPEPPPLEDEQEPEPEPEPEVRRSDSAPPSPVSATVPEEEPPAPRSPVPAKQATLEPKPIVPKAEPKAKARKTEARGLSKAGAKKKGRKEVAQAKEAEVEVEEVPNTVLICMVILLNIGLAILFVHLLT.

Over 1 to 674 (MSGGRFDFDD…EVEVEEVPNT (674 aa)) the chain is Cytoplasmic. MORN repeat units lie at residues 14–36 (YCGG…KGQG), 38–59 (YSGS…SGNT), 60–79 (FEGY…TKGR), 82–104 (YKGE…NSGA), 106–128 (YEGT…DGGT), and 129–151 (YQGQ…PYGM). Ser-162 and Ser-165 each carry phosphoserine. Disordered stretches follow at residues 164-192 (SSLR…SPPV) and 246-273 (LSSG…AAPF). MORN repeat units follow at residues 285 to 307 (YMGE…SGLR) and 308 to 330 (YEGE…DGHR). A Bipartite nuclear localization signal motif is present at residues 345 to 359 (KRRVLPLKSSKVRQK). The disordered stretch occupies residues 439–664 (NSESLLEPPE…RKEVAQAKEA (226 aa)). 3 positions are modified to phosphoserine: Ser-440, Ser-442, and Ser-462. Residues 457–471 (ERPRESPQLHERETP) show a composition bias toward basic and acidic residues. Thr-470 is subject to Phosphothreonine. Residues 474–487 (EGGPPSPAGTPPQP) show a composition bias toward pro residues. Ser-479 is modified (phosphoserine). Thr-483 is subject to Phosphothreonine. Positions 488–492 (KRPRP) match the Nuclear localization signal motif. 2 positions are modified to phosphoserine: Ser-527 and Ser-533. Acidic residues predominate over residues 573–585 (PLEDEQEPEPEPE). Residues Ser-593, Ser-597, and Ser-613 each carry the phosphoserine modification. Over residues 631-644 (AEPKAKARKTEARG) the composition is skewed to basic and acidic residues. The chain crosses the membrane as a helical; Anchor for type IV membrane protein span at residues 675–695 (VLICMVILLNIGLAILFVHLL).

It belongs to the junctophilin family. Interacts with TRPC3. Interacts with BAG5 and HSPA8; the interaction with HSPA8 is increased in the presence of BAG5. In terms of assembly, interacts with MEF2C. Post-translationally, proteolytically cleaved by calpain in response to cardiac stress. The major cleavage site takes place at the C-terminus and leads to the release of the Junctophilin-2 N-terminal fragment chain (JP2NT). Phosphorylation on Ser-165, probably by PKC, affects RYR1-mediated calcium ion release, interaction with TRPC3, and skeletal muscle myotubule development. Abundantly expressed in skeletal muscle and heart. Weak expression in stomach and lung.

The protein resides in the cell membrane. It is found in the sarcoplasmic reticulum membrane. Its subcellular location is the endoplasmic reticulum membrane. The protein localises to the nucleus. Membrane-binding protein that provides a structural bridge between the plasma membrane and the sarcoplasmic reticulum and is required for normal excitation-contraction coupling in cardiomyocytes. Provides a structural foundation for functional cross-talk between the cell surface and intracellular Ca(2+) release channels by maintaining the 12-15 nm gap between the sarcolemma and the sarcoplasmic reticulum membranes in the cardiac dyads. Necessary for proper intracellular Ca(2+) signaling in cardiac myocytes via its involvement in ryanodine receptor-mediated calcium ion release. Contributes to the construction of skeletal muscle triad junctions. In terms of biological role, transcription repressor required to safeguard against the deleterious effects of cardiac stress. Generated following cleavage of the Junctophilin-2 chain by calpain in response to cardiac stress in cardiomyocytes. Following cleavage and release from the membrane, translocates to the nucleus, binds DNA and represses expression of genes implicated in cell growth and differentiation, hypertrophy, inflammation and fibrosis. Modifies the transcription profile and thereby attenuates pathological remodeling in response to cardiac stress. Probably acts by competing with MEF2 transcription factors and TATA-binding proteins. The polypeptide is Junctophilin-2 (Mus musculus (Mouse)).